A 101-amino-acid chain; its full sequence is Urease subunit beta (101 aa).

This sequence belongs to the urease beta subunit family. As to quaternary structure, heterotrimer of UreA (gamma), UreB (beta) and UreC (alpha) subunits. Three heterotrimers associate to form the active enzyme.

It is found in the cytoplasm. The enzyme catalyses urea + 2 H2O + H(+) = hydrogencarbonate + 2 NH4(+). It participates in nitrogen metabolism; urea degradation; CO(2) and NH(3) from urea (urease route): step 1/1. This is Urease subunit beta from Bradyrhizobium sp. (strain ORS 278).